A 402-amino-acid polypeptide reads, in one-letter code: Tol-Pal system protein TolB (402 aa).

A signal peptide spans 1-17; it reads MKKIVAIFLVFLGSLWA.

It belongs to the TolB family. In terms of assembly, the Tol-Pal system is composed of five core proteins: the inner membrane proteins TolA, TolQ and TolR, the periplasmic protein TolB and the outer membrane protein Pal. They form a network linking the inner and outer membranes and the peptidoglycan layer.

It is found in the periplasm. Its function is as follows. Part of the Tol-Pal system, which plays a role in outer membrane invagination during cell division and is important for maintaining outer membrane integrity. This is Tol-Pal system protein TolB from Campylobacter jejuni (strain RM1221).